Here is a 370-residue protein sequence, read N- to C-terminus: Chorismate synthase (370 aa).

R48 serves as a coordination point for NADP(+). Residues 125-127, 241-242, G286, 301-305, and R327 each bind FMN; these read RSS, NA, and KPTSS.

It belongs to the chorismate synthase family. As to quaternary structure, homotetramer. FMNH2 serves as cofactor.

It carries out the reaction 5-O-(1-carboxyvinyl)-3-phosphoshikimate = chorismate + phosphate. The protein operates within metabolic intermediate biosynthesis; chorismate biosynthesis; chorismate from D-erythrose 4-phosphate and phosphoenolpyruvate: step 7/7. Its function is as follows. Catalyzes the anti-1,4-elimination of the C-3 phosphate and the C-6 proR hydrogen from 5-enolpyruvylshikimate-3-phosphate (EPSP) to yield chorismate, which is the branch point compound that serves as the starting substrate for the three terminal pathways of aromatic amino acid biosynthesis. This reaction introduces a second double bond into the aromatic ring system. This Ruegeria sp. (strain TM1040) (Silicibacter sp.) protein is Chorismate synthase.